The following is a 346-amino-acid chain: Glycerol-3-phosphate dehydrogenase [NAD(P)+] (346 aa).

The NADPH site is built by serine 15, tryptophan 16, arginine 36, and lysine 110. 3 residues coordinate sn-glycerol 3-phosphate: lysine 110, glycine 139, and serine 141. NADPH is bound at residue alanine 143. Positions 194, 247, 257, 258, and 259 each coordinate sn-glycerol 3-phosphate. Residue lysine 194 is the Proton acceptor of the active site. Arginine 258 lines the NADPH pocket. The NADPH site is built by valine 282 and glutamate 284.

This sequence belongs to the NAD-dependent glycerol-3-phosphate dehydrogenase family.

The protein resides in the cytoplasm. The enzyme catalyses sn-glycerol 3-phosphate + NAD(+) = dihydroxyacetone phosphate + NADH + H(+). It catalyses the reaction sn-glycerol 3-phosphate + NADP(+) = dihydroxyacetone phosphate + NADPH + H(+). It participates in membrane lipid metabolism; glycerophospholipid metabolism. Functionally, catalyzes the reduction of the glycolytic intermediate dihydroxyacetone phosphate (DHAP) to sn-glycerol 3-phosphate (G3P), the key precursor for phospholipid synthesis. This chain is Glycerol-3-phosphate dehydrogenase [NAD(P)+], found in Xylella fastidiosa (strain M23).